The primary structure comprises 1042 residues: Sarcoplasmic/endoplasmic reticulum calcium ATPase 2 (1042 aa).

Residues Met-1–Thr-48 lie on the Cytoplasmic side of the membrane. A Phosphoserine modification is found at Ser-38. A helical transmembrane segment spans residues Leu-49 to Ala-69. Residues Cys-70–Val-89 are Lumenal-facing. Residues Glu-90 to Arg-110 traverse the membrane as a helical segment. At Asn-111 to Leu-253 the chain is on the cytoplasmic side. Residues Asp-254–Ile-273 traverse the membrane as a helical segment. The Lumenal portion of the chain corresponds to Ile-274 to Tyr-295. 3'-nitrotyrosine occurs at positions 294 and 295. The helical transmembrane segment at Phe-296–Ala-313 threads the bilayer. Ca(2+) is bound by residues Val-304, Ala-305, Ile-307, and Glu-309. The Cytoplasmic segment spans residues Val-314–Met-756. The active-site 4-aspartylphosphate intermediate is the Asp-351. The Mg(2+) site is built by Asp-351 and Thr-353. Thr-353 provides a ligand contact to ATP. Position 441 is a phosphothreonine (Thr-441). Residues Glu-442, Arg-489, and Lys-514 each contribute to the ATP site. At Ser-531 the chain carries Phosphoserine. Arg-559 provides a ligand contact to ATP. The interaction with HAX1 stretch occupies residues Met-575–Gly-594. Ser-580 is modified (phosphoserine). The ATP site is built by Thr-624, Gly-625, and Asp-626. Residue Ser-663 is modified to Phosphoserine. Residues Arg-677 and Lys-683 each coordinate ATP. Asp-702 is a binding site for Mg(2+). Residue Asn-705 coordinates ATP. The helical transmembrane segment at Lys-757 to Leu-776 threads the bilayer. Positions 767 and 770 each coordinate Ca(2+). Residues Thr-777–Leu-786 are Lumenal-facing. The chain crosses the membrane as a helical span at residues Ile-787–Gly-807. Residues Ile-787–Gly-807 form an interaction with PLN region. Residues Pro-788 to Ser-1042 are interaction with TMEM64 and PDIA3. Ca(2+) contacts are provided by Asn-795, Thr-798, and Asp-799. Residues Phe-808–Leu-827 lie on the Cytoplasmic side of the membrane. Residues Ile-828–Ala-850 form a helical membrane-spanning segment. The Lumenal segment spans residues Ala-851 to Met-896. Residues Cys-875 and Cys-887 are joined by a disulfide bond. The helical transmembrane segment at Thr-897–Ser-916 threads the bilayer. Glu-907 provides a ligand contact to Ca(2+). Topologically, residues Glu-917–Asn-929 are cytoplasmic. The helical transmembrane segment at Ile-930 to Tyr-948 threads the bilayer. The interaction with PLN stretch occupies residues Trp-931–Leu-942. The Lumenal segment spans residues Val-949–Leu-963. Residues Thr-964–Lys-984 form a helical membrane-spanning segment. Residues Phe-985–Ser-1042 lie on the Cytoplasmic side of the membrane.

The protein belongs to the cation transport ATPase (P-type) (TC 3.A.3) family. Type IIA subfamily. Interacts with sarcolipin (SLN); the interaction inhibits ATP2A2 Ca(2+) affinity. Interacts with phospholamban (PLN); the interaction inhibits ATP2A2 Ca(2+) affinity. Interacts with myoregulin (MRLN). Interacts with ARLN and ERLN; the interactions inhibit ATP2A2 Ca(2+) affinity. Interacts with STRIT1/DWORF; the interaction results in activation of ATP2A2. Interacts with the monomeric forms of SLN, PLN, ARLN, ERLN and STRI1/DWORF. Interacts with HAX1. Interacts with S100A8 and S100A9. Interacts with SLC35G1 and STIM1. Interacts with TMEM203. Interacts with TMEM64 and PDIA3. Interacts with TMX1. Interacts with TMX2. Interacts with VMP1; VMP1 competes with PLN and SLN to prevent them from forming an inhibitory complex with ATP2A2. Interacts with ULK1. Interacts with S100A1 in a Ca(2+)-dependent manner. Interacts with TUNAR. Interacts with FLVCR2; this interaction occurs in the absence of heme and promotes ATP2A2 proteasomal degradation; this complex is dissociated upon heme binding. Interacts with FNIP1. In terms of assembly, interacts with TRAM2 (via C-terminus). Requires Mg(2+) as cofactor. Nitrated under oxidative stress. Nitration on the two tyrosine residues inhibits catalytic activity. In terms of processing, serotonylated on Gln residues by TGM2 in response to hypoxia, leading to its inactivation. Detected in heart left ventricle (at protein level). Isoform 2 is highly expressed in heart and slow twitch skeletal muscle. Isoform 1 is widely expressed.

It localises to the endoplasmic reticulum membrane. The protein resides in the sarcoplasmic reticulum membrane. The enzyme catalyses Ca(2+)(in) + ATP + H2O = Ca(2+)(out) + ADP + phosphate + H(+). With respect to regulation, has different conformational states with differential Ca2+ affinity. The E1 conformational state (active form) shows high Ca(2+) affinity, while the E2 state exhibits low Ca(2+) affinity. Binding of ATP allosterically increases its affinity for subsequent binding of Ca2+. Reversibly inhibited by phospholamban (PLN) at low calcium concentrations. PLN inhibits ATP2A2 Ca(2+) affinity by disrupting its allosteric activation by ATP. Inhibited by sarcolipin (SLN) and myoregulin (MRLN). The inhibition is blocked by VMP1. Enhanced by STRIT1/DWORF; STRIT1 increases activity by displacing sarcolipin (SLN), phospholamban (PLN) and myoregulin (MRLN). Stabilizes SERCA2 in its E2 state. Its function is as follows. This magnesium-dependent enzyme catalyzes the hydrolysis of ATP coupled with the translocation of calcium from the cytosol to the sarcoplasmic reticulum lumen. Involved in autophagy in response to starvation. Upon interaction with VMP1 and activation, controls ER-isolation membrane contacts for autophagosome formation. Also modulates ER contacts with lipid droplets, mitochondria and endosomes. In coordination with FLVCR2 mediates heme-stimulated switching from mitochondrial ATP synthesis to thermogenesis. Involved in the regulation of the contraction/relaxation cycle. Acts as a regulator of TNFSF11-mediated Ca(2+) signaling pathways via its interaction with TMEM64 which is critical for the TNFSF11-induced CREB1 activation and mitochondrial ROS generation necessary for proper osteoclast generation. Association between TMEM64 and SERCA2 in the ER leads to cytosolic Ca(2+) spiking for activation of NFATC1 and production of mitochondrial ROS, thereby triggering Ca(2+) signaling cascades that promote osteoclast differentiation and activation. The polypeptide is Sarcoplasmic/endoplasmic reticulum calcium ATPase 2 (ATP2A2) (Sus scrofa (Pig)).